Consider the following 238-residue polypeptide: Adenylate dimethylallyltransferase (238 aa).

The protein belongs to the isopentenyl transferase family.

The catalysed reaction is dimethylallyl diphosphate + AMP = N(6)-(dimethylallyl)adenosine 5'-phosphate + diphosphate. In terms of biological role, transfers dimethylallyl groups to AMP as part of the biosynthesis of cytokinin phytohormones. This chain is Adenylate dimethylallyltransferase (tzs), found in Ralstonia solanacearum (Pseudomonas solanacearum).